The primary structure comprises 317 residues: Olfactory receptor 8B3 (317 aa).

Over 1–32 (MISMLAGNGSSVTEFVLAGLTDRPELQLPLFY) the chain is Extracellular. An N-linked (GlcNAc...) asparagine glycan is attached at N8. The chain crosses the membrane as a helical span at residues 33-53 (LFLIIYIITVVGNLGLIILIG). Topologically, residues 54-59 (LNPHLH) are cytoplasmic. Residues 60-80 (TPMYYFLFNLSFIDLCYSSVF) form a helical membrane-spanning segment. Topologically, residues 81 to 97 (SPKMLINFVSEKNSISY) are extracellular. A helical membrane pass occupies residues 98–118 (AGCMTQLFLFLFFVISECYML). The Cytoplasmic portion of the chain corresponds to 119–136 (TSMAYDRYVAICNPLLYK). Residues 137 to 157 (VTMSPQICSVISFAAYGMGFA) form a helical membrane-spanning segment. Topologically, residues 158 to 199 (GSSAHTGCMLRLTFCNVNVINHYLCDILPLLQLSCTSTYVNE) are extracellular. The chain crosses the membrane as a helical span at residues 200 to 220 (VVVLIVVGINITVPSFTILIS). Over 221-242 (YVFILANILNIKSTQGRAKAFS) the chain is Cytoplasmic. The helical transmembrane segment at 243 to 263 (TCSSHIMAISLFFGSAAFMYL) threads the bilayer. The Extracellular segment spans residues 264-274 (KYSSGSMEQGK). A helical transmembrane segment spans residues 275–294 (ISSVFYTNVGPMLNPLIYSL). The Cytoplasmic portion of the chain corresponds to 295 to 317 (RNKDVKVALRKSLIKFREKTDFN).

It belongs to the G-protein coupled receptor 1 family.

The protein resides in the cell membrane. Functionally, odorant receptor. This Mus musculus (Mouse) protein is Olfactory receptor 8B3.